A 194-amino-acid polypeptide reads, in one-letter code: MTHPTDIKTLARWMAADFSNQEQAFANPPFFAHIRVCMRPLPDELLNGTSLFLEQAYDFMLNTPYRLRVFKLSLVDDHIELENFKVKEEANFFGASREPQRLKNLTLDLLEPMLGCDMNVTWTGNSFKGVVKPGKQCLVFRKDRMTYLDNSFEISERGLISVDRGLDPETDQLVWGSIAGPFEFVRRTSFAEEV.

The protein belongs to the CpcT/CpeT biliprotein lyase family.

Covalently attaches a chromophore to Cys residue(s) of phycobiliproteins. In Microcystis aeruginosa (strain NIES-843 / IAM M-2473), this protein is Chromophore lyase CpcT/CpeT 1.